The primary structure comprises 283 residues: Thymidylate synthase (283 aa).

Arg-22 serves as a coordination point for dUMP. Cys-160 functions as the Nucleophile in the catalytic mechanism. DUMP-binding positions include 180–183 (RSCD), Asn-191, and 221–223 (HIY). Asp-183 lines the (6R)-5,10-methylene-5,6,7,8-tetrahydrofolate pocket. Residue Ser-282 participates in (6R)-5,10-methylene-5,6,7,8-tetrahydrofolate binding.

Belongs to the thymidylate synthase family. Bacterial-type ThyA subfamily. In terms of assembly, homodimer.

The protein resides in the cytoplasm. The catalysed reaction is dUMP + (6R)-5,10-methylene-5,6,7,8-tetrahydrofolate = 7,8-dihydrofolate + dTMP. It participates in pyrimidine metabolism; dTTP biosynthesis. Functionally, catalyzes the reductive methylation of 2'-deoxyuridine-5'-monophosphate (dUMP) to 2'-deoxythymidine-5'-monophosphate (dTMP) while utilizing 5,10-methylenetetrahydrofolate (mTHF) as the methyl donor and reductant in the reaction, yielding dihydrofolate (DHF) as a by-product. This enzymatic reaction provides an intracellular de novo source of dTMP, an essential precursor for DNA biosynthesis. This chain is Thymidylate synthase, found in Shewanella pealeana (strain ATCC 700345 / ANG-SQ1).